The chain runs to 895 residues: MRTEKLFFCILLVFFFCLEFNRGQNNGKTLVDVGVVTDVDTSHSKVVMLCINMSISDFYSSNPQFETRLVVNVGDSKSDVVGAAIAALDLIKNKQVKAILGPWTSMQAHFLIEIGQKSRVPIVSYSATSPILTSLRSPYFLRATYEDSFQVQPIKAIIKLFGWREVVPVYIDNTFGEGIMPRLTDALQDINVRIPYRSVIAINATDHEISVELLKMMNMPTRVFLVHMYYDLASRFFIKAKELGLMEPGYVWILTNGVIDDLSLINETAVEAMEGVLGIKTYIPKSPDLEKFRSRWRSLFPRVELSVYGLWAYDATTALAVAIEEAGTNNMTFSKVVDTGRNVSELEALGLSQFGPKLLQTLLTVQFRGLAGEFRFFRGQLQPSVFEIVNIINTGEKSIGFWKEGNGLVKKLDQQASSISALSTWKDHLKHIVWPGEADSVPKGWQIPTKGKKLRIGVPKRTGYTDLVKVTRDPITNSTVVTGFCIDFFEAVIRELPYDVSYEFIPFEKPDGKTAGNYNDLVYQVYLGRYDAVVGDTTILVNRSSYVDFTFPFIKSGVGLIVEMTDPVKRDYILFMKPLSWKLWLTSFISFFLVGCTVWVLEYKRNPDFSGPPRFQASTICWFAFSTMVFAPRERVFSFWARALVIAWYFLVLVLTQSYTASLASLLTSQKLNPTITSMSSLLEKGETVGYQRTSFILGKLKERGFPQSSLVPFDTAEECDELLSKGPKKGGVSGAFLEIPYLRLFLGQFCNTYKMVEEPFNVDGFGFVFPIGSPLVADVSRAILKVAESPKAMELERAWFKKKEQSCPDPITNPDPNPSFTSRQLDIDSFLFLFVGVLLVCVMALGNFTYCFLAKDQVSYLDKVEMSPCSSSQQMPVKRKTQLNMSQVHDQDSL.

An N-terminal signal peptide occupies residues 1 to 23; that stretch reads MRTEKLFFCILLVFFFCLEFNRG. Over 24–582 the chain is Extracellular; the sequence is QNNGKTLVDV…ILFMKPLSWK (559 aa). N-linked (GlcNAc...) asparagine glycans are attached at residues Asn52, Asn203, Asn266, Asn330, Asn342, Asn477, and Asn542. A helical transmembrane segment spans residues 583 to 603; sequence LWLTSFISFFLVGCTVWVLEY. The Cytoplasmic segment spans residues 604–610; sequence KRNPDFS. The chain crosses the membrane as a helical span at residues 611–631; it reads GPPRFQASTICWFAFSTMVFA. Topologically, residues 632–635 are cytoplasmic; sequence PRER. A helical transmembrane segment spans residues 636 to 656; that stretch reads VFSFWARALVIAWYFLVLVLT. The Extracellular portion of the chain corresponds to 657–830; that stretch reads QSYTASLASL…FTSRQLDIDS (174 aa). A helical transmembrane segment spans residues 831–851; it reads FLFLFVGVLLVCVMALGNFTY. Residues 852–895 are Cytoplasmic-facing; sequence CFLAKDQVSYLDKVEMSPCSSSQQMPVKRKTQLNMSQVHDQDSL. Residues 873-895 form a disordered region; it reads SQQMPVKRKTQLNMSQVHDQDSL.

Belongs to the glutamate-gated ion channel (TC 1.A.10.1) family. As to quaternary structure, may form heteromers. Expressed predominantly in roots.

The protein resides in the membrane. Functionally, glutamate-gated receptor that probably acts as a non-selective cation channel. May be involved in light-signal transduction and calcium homeostasis via the regulation of calcium influx into cells. In Arabidopsis thaliana (Mouse-ear cress), this protein is Glutamate receptor 2.3 (GLR2.3).